The primary structure comprises 279 residues: Small ribosomal subunit protein uS2 (279 aa).

Residues arginine 232–glutamate 279 form a disordered region. The segment covering glutamate 252–glutamate 271 has biased composition (basic and acidic residues).

The protein belongs to the universal ribosomal protein uS2 family.

This is Small ribosomal subunit protein uS2 from Salinispora arenicola (strain CNS-205).